The chain runs to 524 residues: MVERKRIEIPEGVKVKESVGEEAEFPFDISPMYEGERIRKGDMYVELGGPTQPGFELVMALPMDQVEDMKVTLIGPDLDEMEEGQAYPYAMIYYIAGEMVETDLEPVIERRNHDFQNYIEGYMHLNQRYDIWIRIGKNAIKKGLKSLIQIAKATMMLYKNELPFIEKIEAVYITDKDLVEKLLNELAMPIFEERDARVEALSDEDVDEFYSCTLCQSFAPTNVCIVSPDRPSLCGAITWFDGRAAAKVDPEGPNRAVPKGELLDPIGGEYSGVNEFAKQESGGEYERIKLHSFFEYPHTSCGCFEVIGFYMPEVDGIGWVHRGYAEPAPNGLTFSTMAGQTGGGKQVVGFLGIGIAYFRSKKFIQADGGWYRTVWMPKELKERVAKYIPDDIRDKIATEEDAKTLDELREFLKKVDHPVVKGVVRPVDGKKITNGWVEEEEEEAEEVAEEAAAEAAPAAQPAQAAQPMAMQPMPMQMPGFQLPALQMPAASAAPAGVKLVIKDAKITIEKVIIKKAEKEKKGGK.

[Ni-Fe-S] cluster is bound by residues C212, C215, C301, and C303. The segment at 436–466 (WVEEEEEEAEEVAEEAAAEAAPAAQPAQAAQ) is disordered. The segment covering 437-452 (VEEEEEEAEEVAEEAA) has biased composition (acidic residues). Over residues 453–466 (AEAAPAAQPAQAAQ) the composition is skewed to low complexity.

The protein belongs to the CdhC family. Monomer. The ACDS complex is made up of alpha, epsilon, beta, gamma and delta chains with a probable stoichiometry of (alpha(2)epsilon(2))(4)-beta(8)-(gamma(1)delta(1))(8). [Ni-Fe-S] cluster is required as a cofactor.

It carries out the reaction Co(I)-[corrinoid Fe-S protein] + acetyl-CoA + H(+) = methyl-Co(III)-[corrinoid Fe-S protein] + CO + CoA. Part of a complex that catalyzes the reversible cleavage of acetyl-CoA, allowing autotrophic growth from CO(2). The alpha-epsilon complex generates CO from CO(2), while the beta subunit (this protein) combines the CO with CoA and a methyl group to form acetyl-CoA. The methyl group, which is incorporated into acetyl-CoA, is transferred to the beta subunit by a corrinoid iron-sulfur protein (the gamma-delta complex). The polypeptide is Acetyl-CoA decarbonylase/synthase complex subunit beta (Archaeoglobus fulgidus (strain ATCC 49558 / DSM 4304 / JCM 9628 / NBRC 100126 / VC-16)).